A 728-amino-acid chain; its full sequence is Propionyl-CoA carboxylase alpha chain, mitochondrial (728 aa).

A mitochondrion-targeting transit peptide spans 1–52 (MAGFWVGTAPLVAAGRRGRWPPQQLMLSAALRTLKHVLYYSRQCLMVSRNLG). The Biotin carboxylation domain occupies 62–509 (TFDKILVANR…STKFLSDVYP (448 aa)). An N6-acetyllysine; alternate modification is found at K65. K65 carries the post-translational modification N6-succinyllysine; alternate. K119 carries the post-translational modification N6-succinyllysine. K150 is modified (N6-acetyllysine; alternate). K150 carries the N6-succinyllysine; alternate modification. K177 lines the ATP pocket. Positions 181–378 (KLLAKKAEVN…LVQEMIRVAK (198 aa)) constitute an ATP-grasp domain. N6-acetyllysine; alternate is present on K200. At K200 the chain carries N6-succinyllysine; alternate. Residues 209–270 (AREI…PRHI), E261, and N296 each bind ATP. S252 is subject to Phosphoserine. K262 carries the N6-succinyllysine modification. Residue K328 is modified to N6-acetyllysine; alternate. K328 bears the N6-succinyllysine; alternate mark. Residues E336, E349, and N351 each coordinate Mg(2+). Positions 336, 349, and 351 each coordinate Mn(2+). Residue E349 is part of the active site. K385 and K407 each carry N6-succinyllysine. F409 contributes to the biotin binding site. K496 is subject to N6-acetyllysine. 3 positions are modified to N6-succinyllysine: K502, K513, and K648. The 76-residue stretch at 653 to 728 (KVTEDTSSVL…GEGDLLVELE (76 aa)) folds into the Biotinyl-binding domain. N6-biotinyllysine; by HLCS is present on K694.

In terms of assembly, the holoenzyme is a dodecamer composed of 6 PCCA/alpha subunits and 6 PCCB/beta subunits. Interacts (via the biotin carboxylation domain) with SIRT4. Interacts with SIRT3 and SIRT5. Mg(2+) serves as cofactor. Requires Mn(2+) as cofactor. Biotin is required as a cofactor. Post-translationally, acetylated. The biotin cofactor is covalently attached to the C-terminal biotinyl-binding domain and is required for the catalytic activity. Biotinylation is catalyzed by HLCS.

The protein localises to the mitochondrion matrix. The enzyme catalyses propanoyl-CoA + hydrogencarbonate + ATP = (S)-methylmalonyl-CoA + ADP + phosphate + H(+). It carries out the reaction butanoyl-CoA + hydrogencarbonate + ATP = (2S)-ethylmalonyl-CoA + ADP + phosphate + H(+). It participates in metabolic intermediate metabolism; propanoyl-CoA degradation; succinyl-CoA from propanoyl-CoA: step 1/3. Functionally, this is one of the 2 subunits of the biotin-dependent propionyl-CoA carboxylase (PCC), a mitochondrial enzyme involved in the catabolism of odd chain fatty acids, branched-chain amino acids isoleucine, threonine, methionine, and valine and other metabolites. Propionyl-CoA carboxylase catalyzes the carboxylation of propionyl-CoA/propanoyl-CoA to D-methylmalonyl-CoA/(S)-methylmalonyl-CoA. Within the holoenzyme, the alpha subunit catalyzes the ATP-dependent carboxylation of the biotin carried by the biotin carboxyl carrier (BCC) domain, while the beta subunit then transfers the carboxyl group from carboxylated biotin to propionyl-CoA. Propionyl-CoA carboxylase also significantly acts on butyryl-CoA/butanoyl-CoA, which is converted to ethylmalonyl-CoA/(2S)-ethylmalonyl-CoA at a much lower rate. Other alternative minor substrates include (2E)-butenoyl-CoA/crotonoyl-CoA. The polypeptide is Propionyl-CoA carboxylase alpha chain, mitochondrial (Homo sapiens (Human)).